The chain runs to 248 residues: Ureidoacrylate amidohydrolase RutB (248 aa).

Aspartate 41 serves as the catalytic Proton acceptor. The active site involves lysine 150. Cysteine 183 serves as the catalytic Nucleophile.

Belongs to the isochorismatase family. RutB subfamily.

The catalysed reaction is (Z)-3-ureidoacrylate + H2O + H(+) = (Z)-3-aminoacrylate + NH4(+) + CO2. It carries out the reaction (Z)-3-ureidoacrylate + H2O = (Z)-3-aminoacrylate + carbamate + H(+). The enzyme catalyses (Z)-2-methylureidoacrylate + H2O + H(+) = (Z)-2-methylaminoacrylate + NH4(+) + CO2. Functionally, hydrolyzes ureidoacrylate to form aminoacrylate and carbamate. The carbamate hydrolyzes spontaneously, thereby releasing one of the nitrogen atoms of the pyrimidine ring as ammonia and one of its carbon atoms as CO2. The polypeptide is Ureidoacrylate amidohydrolase RutB (Methylorubrum extorquens (strain CM4 / NCIMB 13688) (Methylobacterium extorquens)).